Here is an 877-residue protein sequence, read N- to C-terminus: GTPase activating protein homolog 2 (877 aa).

Positions 14-285 (FKFTDNLWDG…SVEMIDITND (272 aa)) constitute an F-BAR domain. The stretch at 130–214 (QEGIKLKQDM…SNCDEEYREQ (85 aa)) forms a coiled coil. The Rho-GAP domain occupies 374 to 560 (VSLDELMNRQ…TLIKQIPPPL (187 aa)). Disordered stretches follow at residues 589–612 (DQLS…GSGS), 644–704 (LPPL…AEPT), and 749–800 (AATP…LAST). 3 stretches are compositionally biased toward low complexity: residues 593 to 612 (NDDN…GSGS), 653 to 676 (SGSG…SPTT), and 749 to 779 (AATP…STST). Residues 780 to 800 (IKTSSPDRTTPLTSSPPLAST) are compositionally biased toward polar residues.

The protein localises to the cytoplasm. It localises to the contractile vacuole. Its function is as follows. Rho GTPase-activating protein involved in the signal transduction pathway. Regulator of the contractile vacuole network as well as involved in driving vacuole emptying. This is GTPase activating protein homolog 2 (mgp2) from Dictyostelium discoideum (Social amoeba).